A 195-amino-acid polypeptide reads, in one-letter code: Nicotinamide riboside kinase 2 (195 aa).

Residue 9-17 (GVTNGGKTT) coordinates ATP. Thr16 and Asp35 together coordinate Mg(2+). Catalysis depends on Asp35, which acts as the Proton acceptor. Residues 35 to 38 (DDFF) and 54 to 55 (WD) contribute to the substrate site. ATP is bound at residue Arg130. Residues Arg131 and 136–137 (YM) contribute to the substrate site. Residues 134-136 (RTY) and 174-176 (KSP) each bind ATP.

Belongs to the uridine kinase family. NRK subfamily. As to quaternary structure, monomer. Interacts with ITGB1 alone or when associated with alpha-7, but not with alpha-5. Expressed in skeletal muscle (at protein level).

The enzyme catalyses beta-nicotinamide D-riboside + ATP = beta-nicotinamide D-ribonucleotide + ADP + H(+). The catalysed reaction is beta-D-ribosylnicotinate + ATP = nicotinate beta-D-ribonucleotide + ADP + H(+). The protein operates within cofactor biosynthesis; NAD(+) biosynthesis. Its function is as follows. Catalyzes the phosphorylation of nicotinamide riboside (NR) and nicotinic acid riboside (NaR) to form nicotinamide mononucleotide (NMN) and nicotinic acid mononucleotide (NaMN). Reduces laminin matrix deposition and cell adhesion to laminin, but not to fibronectin. Involved in the regulation of PXN at the protein level and of PXN tyrosine phosphorylation. May play a role in the regulation of terminal myogenesis. This is Nicotinamide riboside kinase 2 (Nmrk2) from Mus musculus (Mouse).